The primary structure comprises 192 residues: Fe/S biogenesis protein NfuA (192 aa).

Residues C149 and C152 each coordinate [4Fe-4S] cluster.

The protein belongs to the NfuA family. As to quaternary structure, homodimer. The cofactor is [4Fe-4S] cluster.

Functionally, involved in iron-sulfur cluster biogenesis. Binds a 4Fe-4S cluster, can transfer this cluster to apoproteins, and thereby intervenes in the maturation of Fe/S proteins. Could also act as a scaffold/chaperone for damaged Fe/S proteins. The protein is Fe/S biogenesis protein NfuA of Shewanella sp. (strain ANA-3).